A 93-amino-acid chain; its full sequence is uncharacterized protein (93 aa).

3 consecutive transmembrane segments (helical) span residues 15–35 (MAGL…VMLV), 48–68 (ILAI…IYQI), and 72–92 (LSYA…AGVH).

It is found in the cell membrane. This is an uncharacterized protein from Bacillus subtilis (strain 168).